The primary structure comprises 258 residues: Tetraspanin-15 (258 aa).

Topologically, residues 1-20 are cytoplasmic; it reads MGALGDSAYGARGRLIKFSY. A helical membrane pass occupies residues 21-41; it reads IVTALISILFSISCICYGIWL. Residues 42-62 are Extracellular-facing; that stretch reads LARRSQYAELVSPSLYVDVGR. Residues 63 to 83 traverse the membrane as a helical segment; sequence ILVIISILSILNYLICFYAIF. The Cytoplasmic segment spans residues 84–93; sequence KEMRCFVTSC. The helical transmembrane segment at 94–114 threads the bilayer; it reads AVASIVIAVMLIIGGCIGLNF. Residues 115–223 lie on the Extracellular side of the membrane; the sequence is RDQLTHYTPL…STCYEPLQND (109 aa). A helical transmembrane segment spans residues 224–244; the sequence is LLHVMNVASWLCITNAIVQII. Residues 245-258 lie on the Cytoplasmic side of the membrane; that stretch reads PSVAGCWYSKLIRK.

Belongs to the tetraspanin (TM4SF) family. As to quaternary structure, interacts with doxa-1 and bli-3. In terms of tissue distribution, expressed in the body wall (hyp7 hypodermal syncitium), pharynx and vulva. Expressed in a punctate pattern along the thick region of the hypodermis.

Its subcellular location is the membrane. Plays a role in cuticle biogenesis. In complex with doxa-1 and the dual oxidase bli-3, promotes the generation of reactive oxygen species (ROS) and tyrosine cross-linking of collagen, thus stabilizing cuticular extracellular matrix. This chain is Tetraspanin-15, found in Caenorhabditis elegans.